The primary structure comprises 187 residues: UPF0340 protein stu1894 (187 aa).

It belongs to the UPF0340 family.

The sequence is that of UPF0340 protein stu1894 from Streptococcus thermophilus (strain ATCC BAA-250 / LMG 18311).